Consider the following 537-residue polypeptide: Pentatricopeptide repeat-containing protein At4g32450, mitochondrial (537 aa).

A mitochondrion-targeting transit peptide spans 1 to 110 (MIYTLTRGSL…EHSEIINQRN (110 aa)). The span at 113-140 (WQSSDGCSSYGTTGNGVPQENNTGGNHF) shows a compositional bias: polar residues. The segment at 113 to 148 (WQSSDGCSSYGTTGNGVPQENNTGGNHFQQDHSGHS) is disordered. PPR repeat units follow at residues 145 to 179 (SGHSSLDELDSICREGKVKKAVEIIKSWRNEGYVV), 180 to 210 (DLPRLFWIAQLCGDAQALQEAKVVHEFITSS), 215 to 249 (DISAYNSIIEMYSGCGSVEDALTVFNSMPERNLET), 250 to 280 (WCGVIRCFAKNGQGEDAIDTFSRFKQEGNKP), 281 to 316 (DGEMFKEIFFACGVLGDMNEGLLHFESMYKEYGIIP), and 317 to 347 (CMEHYVSLVKMLAEPGYLDEALRFVESMEPN). The interval 412-442 (YGIRYMAAGDISRPENRELYMALKSLKEHMI) is type E(+) motif. Residues 443–537 (EIGYVPLSKL…DGVCSCREYW (95 aa)) form a type DYW motif region.

It belongs to the PPR family. PCMP-H subfamily.

It is found in the mitochondrion. This is Pentatricopeptide repeat-containing protein At4g32450, mitochondrial (PCMP-H63) from Arabidopsis thaliana (Mouse-ear cress).